The sequence spans 279 residues: Bifunctional protein FolD 1 (279 aa).

NADP(+) is bound by residues 166–168 and S191; that span reads GRS.

Belongs to the tetrahydrofolate dehydrogenase/cyclohydrolase family. Homodimer.

The catalysed reaction is (6R)-5,10-methylene-5,6,7,8-tetrahydrofolate + NADP(+) = (6R)-5,10-methenyltetrahydrofolate + NADPH. It catalyses the reaction (6R)-5,10-methenyltetrahydrofolate + H2O = (6R)-10-formyltetrahydrofolate + H(+). It participates in one-carbon metabolism; tetrahydrofolate interconversion. Its function is as follows. Catalyzes the oxidation of 5,10-methylenetetrahydrofolate to 5,10-methenyltetrahydrofolate and then the hydrolysis of 5,10-methenyltetrahydrofolate to 10-formyltetrahydrofolate. This is Bifunctional protein FolD 1 from Salinispora arenicola (strain CNS-205).